The chain runs to 146 residues: Hemoglobin subunit beta-1 (146 aa).

N-acetylserine is present on serine 1. The Globin domain occupies 2–146 (FLSAEEKGLV…VASALAHRYH (145 aa)). An N6-succinyllysine modification is found at lysine 17. Phosphoserine occurs at positions 44 and 50. Lysine 59 carries the N6-succinyllysine modification. Histidine 63 and histidine 92 together coordinate heme b. Asymmetric dimethylarginine is present on arginine 104.

It belongs to the globin family. Heterotetramer of two alpha chains and two beta chains. As to expression, red blood cells.

Involved in oxygen transport from the lung to the various peripheral tissues. In Panthera leo (Lion), this protein is Hemoglobin subunit beta-1 (HBB1).